Reading from the N-terminus, the 665-residue chain is MADPSSYRPAPGTIPESPGVYRFRDGTGRVIYVGKARNLRNRLNSYFADPVNLHQRTRQMVFTAESVDWISVATEVEALQQEFTEIKQYDPRFNVRYRDDKSYPYLAVTVSEEFPRLQVMRGAKRKGVRYFGPYSHAWAIRETLDLLLRVFPARTCSSGVFKRAGQVGRPCLLGYIDKCAAPCVGSVSAEEHRAIVEGFCDFMAGRTDLMVRRLEREMADASAELEFERAARLRDDLAALRRAMEKQTVVFGDGTDADVVAFADDPLEAAVQVFHVRDGRIRGQRGWVVEKTEELTIGDLVHHFCTQVYGGEQGEADVPRELLVPELPADVEALADWLSDHRGSRVTLRVPQRGDKRALLETVARNATDALARHKLKRAGDLTTRSKALDEIAETLGLQTAPLRIECYDISQIQGTDVVASMVVFEDGLPRKSEYRRFIIRGATDDLSAMSEVLRRRFARYLDARAETGEAGVESAGDPATPAGPASTGPGVPDEPRVGTLVDPTTGRPRKFAYPPQLVVVDGGAPQVAAAAQALAELGVDDVALCGLAKRLEEVWLPDDDFPAILPRTSEGLYLLQRVRDEAHRFAITFHRQRRSRRMTESALDRVPGLGEVRRKALLRHFGSLKRLSAASVEEITEVPGVGQRTAEAILAALGDSTQPDEPRT.

The 80-residue stretch at 16 to 95 folds into the GIY-YIG domain; sequence ESPGVYRFRD…IKQYDPRFNV (80 aa). The UVR domain occupies 208-243; sequence DLMVRRLEREMADASAELEFERAARLRDDLAALRRA. Residues 470–507 are disordered; sequence EAGVESAGDPATPAGPASTGPGVPDEPRVGTLVDPTTG. Low complexity predominate over residues 475-491; sequence SAGDPATPAGPASTGPG.

It belongs to the UvrC family. Interacts with UvrB in an incision complex.

The protein localises to the cytoplasm. In terms of biological role, the UvrABC repair system catalyzes the recognition and processing of DNA lesions. UvrC both incises the 5' and 3' sides of the lesion. The N-terminal half is responsible for the 3' incision and the C-terminal half is responsible for the 5' incision. The polypeptide is UvrABC system protein C (Salinispora tropica (strain ATCC BAA-916 / DSM 44818 / JCM 13857 / NBRC 105044 / CNB-440)).